A 539-amino-acid polypeptide reads, in one-letter code: Sorting nexin-27 (539 aa).

The segment at 1–40 is disordered; sequence MADEDGEGIHPSAPHRNGGGGGGSGLHCAGNGGGGGGGPR. The span at 17-39 shows a compositional bias: gly residues; sequence NGGGGGGSGLHCAGNGGGGGGGP. Positions 41-134 constitute a PDZ domain; the sequence is VVRIVKSESG…ELILTVLSVP (94 aa). A phosphoserine mark is found at S49 and S60. The PX domain occupies 159 to 267; that stretch reads QAVPISVPTY…EFLSESDENY (109 aa). Residues 271 to 360 form the Ras-associating domain; sequence SDVELRVALP…TCLTIRKWLF (90 aa). The interval 271–360 is FERM-like region F1; it reads SDVELRVALP…TCLTIRKWLF (90 aa). The FERM-like region F2 stretch occupies residues 371-419; that stretch reads NDLAVTYFFHQAVDDVKKGYIKAEEKSYQLQKLHEQRKMVMYLNMLRTC. The tract at residues 423–523 is FERM-like region F3; the sequence is NEIIFPHCAC…RVFCELKWRK (101 aa).

Core component of the SNX27-retromer, a multiprotein complex composed of SNX27, the WASH complex and the retromer complex. Interacts (via the FERM-like regions) with the WASH complex. Interacts with SNX1. Interacts with CYTIP. Interacts with DGKZ. Interacts with MCC. Interacts (via PDZ domain) with a number of target transmembrane proteins (via PDZ-binding motif): ABCC4, ADRB2, ARHGEF7, GRIA1, GRIA2, GRIN1, GRIN2A GRIN2C, KCNJ6, KCNJ9 and SLC2A1/GLUT1. Interacts (via PDZ domains) with SLC9A3; directs SLC9A3 membrane insertion from early endosomes to the plasma membrane. In terms of tissue distribution, expressed in cells of hematopoietic origin.

It localises to the early endosome membrane. The protein localises to the cytoplasm. The protein resides in the cytosol. Its function is as follows. Involved in the retrograde transport from endosome to plasma membrane, a trafficking pathway that promotes the recycling of internalized transmembrane proteins. Following internalization, endocytosed transmembrane proteins are delivered to early endosomes and recycled to the plasma membrane instead of being degraded in lysosomes. SNX27 specifically binds and directs sorting of a subset of transmembrane proteins containing a PDZ-binding motif at the C-terminus: following interaction with target transmembrane proteins, associates with the retromer complex, preventing entry into the lysosomal pathway, and promotes retromer-tubule based plasma membrane recycling. SNX27 also binds with the WASH complex. Interacts with membranes containing phosphatidylinositol-3-phosphate (PtdIns(3P)). May participate in establishment of natural killer cell polarity. Recruits CYTIP to early endosomes. The sequence is that of Sorting nexin-27 (Snx27) from Mus musculus (Mouse).